Reading from the N-terminus, the 211-residue chain is MGQKVHPIGFRIGVTQTHRSQWFAKPKDYAKLVEEDLLIREFAESRLPDAGISRINISRQVDRIEIEFFTARPRALVGAKGETLTQLRDEIKAKLPDTRNVALYVTKTQQPEMEAICIAENIAEQLEKRTPFRRTMRQAIMRARKAGAEGIKIQISGRLNGAEIARHEWAREGRVPLHTIRADIDYATARAQTIYGILGIKVWVCKGEKSC.

One can recognise a KH type-2 domain in the interval 39 to 109 (IREFAESRLP…NVALYVTKTQ (71 aa)).

The protein belongs to the universal ribosomal protein uS3 family. In terms of assembly, part of the 30S ribosomal subunit.

The protein resides in the plastid. It localises to the chloroplast. In Ostreococcus tauri, this protein is Small ribosomal subunit protein uS3c (rps3).